The following is an 837-amino-acid chain: Tuftelin-interacting protein 11 (837 aa).

2 stretches are compositionally biased toward basic and acidic residues: residues 1–13 (MSLSHLYRDGEGR) and 50–64 (TYGVWAEHDSDDERP). Disordered regions lie at residues 1-21 (MSLSHLYRDGEGRVDDDDDER) and 50-136 (TYGV…AGGT). Residues 1-50 (MSLSHLYRDGEGRVDDDDDERENFEITDWDLQNEFNPNRQRHWQTKEEAT) are required for interaction with DHX15. Residues Ser-2, Ser-59, and Ser-98 each carry the phosphoserine modification. A compositionally biased stretch (acidic residues) spans 91–102 (EEAELDDSEDEE). Residues 103-116 (KPGKQEELPKDLGP) are compositionally biased toward basic and acidic residues. Ser-144 carries the phosphoserine modification. The G-patch domain maps to 149-195 (TKGIGQKLLQKMGYVPGRGLGKNAQGIINPIEAKQRKGKGAVGAYGS). The tract at residues 183 to 236 (QRKGKGAVGAYGSERTTQSLQDFPVVDSEEEAEEEFQKELSQWRKDPSGSKKKP) is disordered. A Phosphoserine modification is found at Ser-210. Positions 217 to 231 (EFQKELSQWRKDPSG) are enriched in basic and acidic residues. The short motif at 700-705 (VKDKFN) is the Nuclear localization signal element. The required for nuclear speckle localization stretch occupies residues 710–734 (IMNRAVSSNVGAYMQPGARENIAYL).

It belongs to the TFP11/STIP family. As to quaternary structure, identified in the spliceosome C complex. Found in the Intron Large (IL) complex, a post-mRNA release spliceosomal complex containing the excised intron, U2, U5 and U6 snRNPs, and splicing factors. Interacts with TUFT1. Interacts with DHX15; indicative for a recruitment of DHX15 to the IL complex. Interacts with GCFC2.

It is found in the cytoplasm. The protein resides in the nucleus. Functionally, involved in pre-mRNA splicing, specifically in spliceosome disassembly during late-stage splicing events. Intron turnover seems to proceed through reactions in two lariat-intron associated complexes termed Intron Large (IL) and Intron Small (IS). In cooperation with DHX15 seems to mediate the transition of the U2, U5 and U6 snRNP-containing IL complex to the snRNP-free IS complex leading to efficient debranching and turnover of excised introns. May play a role in the differentiation of ameloblasts and odontoblasts or in the forming of the enamel extracellular matrix. In Oryctolagus cuniculus (Rabbit), this protein is Tuftelin-interacting protein 11 (TFIP11).